A 299-amino-acid chain; its full sequence is Mitochondrial 2-oxodicarboxylate carrier (299 aa).

Solcar repeat units follow at residues 11 to 100 (REAS…YKKL), 107 to 196 (SPAL…VKNM), and 205 to 294 (LEFW…TYSW). Transmembrane regions (helical) follow at residues 17-37 (IVAGGSAGLVEICLMHPLDVV), 70-89 (FGFYKGILPPILAETPKRAV), 113-133 (AIAGLGSGLTEAIVVNPFEVV), 167-187 (GLNKGLTATLGRHGVFNMVYF), 205-225 (LEFWRKFGIGLLSGTIASVIN), and 277-297 (LGPGGAVMLLVYEYTYSWLQE).

Belongs to the mitochondrial carrier (TC 2.A.29) family. Expressed in placenta, gall bladder and colon.

It is found in the mitochondrion inner membrane. It catalyses the reaction 2-oxoadipate(in) + 2-oxoglutarate(out) = 2-oxoadipate(out) + 2-oxoglutarate(in). It carries out the reaction hexanedioate(in) + 2-oxoglutarate(out) = hexanedioate(out) + 2-oxoglutarate(in). The enzyme catalyses L-2-aminoadipate(in) + 2-oxoglutarate(out) = L-2-aminoadipate(out) + 2-oxoglutarate(in). The catalysed reaction is glutarate(in) + 2-oxoglutarate(out) = glutarate(out) + 2-oxoglutarate(in). It catalyses the reaction 2-oxoheptanedioate(in) + 2-oxoglutarate(out) = 2-oxoheptanedioate(out) + 2-oxoglutarate(in). It carries out the reaction heptanedioate(in) + 2-oxoglutarate(out) = heptanedioate(out) + 2-oxoglutarate(in). The enzyme catalyses citrate(in) + 2-oxoglutarate(out) = citrate(out) + 2-oxoglutarate(in). Its function is as follows. Transports dicarboxylates across the inner membranes of mitochondria by a counter-exchange mechanism. Can transport 2-oxoadipate (2-oxohexanedioate), 2-oxoglutarate, adipate (hexanedioate), glutarate, and to a lesser extent, pimelate (heptanedioate), 2-oxopimelate (2-oxoheptanedioate), 2-aminoadipate (2-aminohexanedioate), oxaloacetate, and citrate. Plays a central role in catabolism of lysine, hydroxylysine, and tryptophan, by transporting common metabolite intermediates (such as 2-oxoadipate) into the mitochondria, where it is converted into acetyl-CoA and can enter the citric acid (TCA) cycle. The protein is Mitochondrial 2-oxodicarboxylate carrier (SLC25A21) of Homo sapiens (Human).